Here is a 145-residue protein sequence, read N- to C-terminus: MDVGIILGILSAMGFLVFLGIGGHILIGYEIIRKISKAYEKGEDVKELENKIINKSHLTNTLEKITTFTLTSIFLFEMEKYRYVIDVGYSILFLVTLTLYLVPNLSLLVWVTFFGATVFMIMLWILRFRAIKEFNKAFIEELTTQ.

The next 3 helical transmembrane spans lie at 3–23 (VGII…GIGG), 83–103 (YVID…YLVP), and 105–125 (LSLL…MLWI).

The protein resides in the cell membrane. This is an uncharacterized protein from Methanocaldococcus jannaschii (strain ATCC 43067 / DSM 2661 / JAL-1 / JCM 10045 / NBRC 100440) (Methanococcus jannaschii).